The chain runs to 198 residues: tRNA (pseudouridine(54)-N(1))-methyltransferase (198 aa).

Leu-128 contributes to the S-adenosyl-L-methionine binding site.

This sequence belongs to the methyltransferase superfamily. TrmY family. Homodimer.

It localises to the cytoplasm. The catalysed reaction is pseudouridine(54) in tRNA + S-adenosyl-L-methionine = N(1)-methylpseudouridine(54) in tRNA + S-adenosyl-L-homocysteine + H(+). In terms of biological role, specifically catalyzes the N1-methylation of pseudouridine at position 54 (Psi54) in tRNAs. This is tRNA (pseudouridine(54)-N(1))-methyltransferase from Haloarcula marismortui (strain ATCC 43049 / DSM 3752 / JCM 8966 / VKM B-1809) (Halobacterium marismortui).